Here is a 367-residue protein sequence, read N- to C-terminus: NADH-quinone oxidoreductase subunit D (367 aa).

The protein belongs to the complex I 49 kDa subunit family. As to quaternary structure, NDH-1 is composed of 14 different subunits. Subunits NuoB, C, D, E, F, and G constitute the peripheral sector of the complex.

It is found in the cell membrane. The enzyme catalyses a quinone + NADH + 5 H(+)(in) = a quinol + NAD(+) + 4 H(+)(out). Functionally, NDH-1 shuttles electrons from NADH, via FMN and iron-sulfur (Fe-S) centers, to quinones in the respiratory chain. The immediate electron acceptor for the enzyme in this species is believed to be a menaquinone. Couples the redox reaction to proton translocation (for every two electrons transferred, four hydrogen ions are translocated across the cytoplasmic membrane), and thus conserves the redox energy in a proton gradient. The polypeptide is NADH-quinone oxidoreductase subunit D (Geobacillus kaustophilus (strain HTA426)).